Reading from the N-terminus, the 177-residue chain is Ribosome maturation factor RimM (177 aa).

A PRC barrel domain is found at 104–176; it reads DGEYYFFEIL…KIIVNMPEWL (73 aa).

This sequence belongs to the RimM family. As to quaternary structure, binds ribosomal protein uS19.

It localises to the cytoplasm. Its function is as follows. An accessory protein needed during the final step in the assembly of 30S ribosomal subunit, possibly for assembly of the head region. Essential for efficient processing of 16S rRNA. May be needed both before and after RbfA during the maturation of 16S rRNA. It has affinity for free ribosomal 30S subunits but not for 70S ribosomes. This Fervidobacterium nodosum (strain ATCC 35602 / DSM 5306 / Rt17-B1) protein is Ribosome maturation factor RimM.